A 334-amino-acid chain; its full sequence is Glyceraldehyde-3-phosphate dehydrogenase (334 aa).

Residues 12–13 (RI), aspartate 35, arginine 79, and serine 121 each bind NAD(+). D-glyceraldehyde 3-phosphate contacts are provided by residues 152-154 (SCT), threonine 183, arginine 198, 211-212 (TG), and arginine 234. Catalysis depends on cysteine 153, which acts as the Nucleophile. Residue asparagine 315 participates in NAD(+) binding.

Belongs to the glyceraldehyde-3-phosphate dehydrogenase family. Homotetramer.

Its subcellular location is the cytoplasm. It catalyses the reaction D-glyceraldehyde 3-phosphate + phosphate + NAD(+) = (2R)-3-phospho-glyceroyl phosphate + NADH + H(+). It participates in carbohydrate degradation; glycolysis; pyruvate from D-glyceraldehyde 3-phosphate: step 1/5. Its function is as follows. Catalyzes the oxidative phosphorylation of glyceraldehyde 3-phosphate (G3P) to 1,3-bisphosphoglycerate (BPG) using the cofactor NAD. The first reaction step involves the formation of a hemiacetal intermediate between G3P and a cysteine residue, and this hemiacetal intermediate is then oxidized to a thioester, with concomitant reduction of NAD to NADH. The reduced NADH is then exchanged with the second NAD, and the thioester is attacked by a nucleophilic inorganic phosphate to produce BPG. This is Glyceraldehyde-3-phosphate dehydrogenase (gap) from Corynebacterium glutamicum (strain ATCC 13032 / DSM 20300 / JCM 1318 / BCRC 11384 / CCUG 27702 / LMG 3730 / NBRC 12168 / NCIMB 10025 / NRRL B-2784 / 534).